A 151-amino-acid polypeptide reads, in one-letter code: GTP-dependent dephospho-CoA kinase (151 aa).

Positions 30, 31, 49, 51, and 104 each coordinate GTP.

This sequence belongs to the GTP-dependent DPCK family.

It catalyses the reaction 3'-dephospho-CoA + GTP = GDP + CoA + H(+). It functions in the pathway cofactor biosynthesis; coenzyme A biosynthesis. Functionally, catalyzes the GTP-dependent phosphorylation of the 3'-hydroxyl group of dephosphocoenzyme A to form coenzyme A (CoA). This chain is GTP-dependent dephospho-CoA kinase, found in Cenarchaeum symbiosum (strain A).